The following is a 402-amino-acid chain: Argininosuccinate synthase (402 aa).

Residues 9 to 17 (AYSGGLDTS) and Ala-36 each bind ATP. 2 residues coordinate L-citrulline: Tyr-87 and Ser-92. Position 117 (Gly-117) interacts with ATP. 3 residues coordinate L-aspartate: Thr-119, Asn-123, and Asp-124. Residue Asn-123 participates in L-citrulline binding. Residues Arg-127, Ser-176, Ser-185, Glu-261, and Tyr-273 each coordinate L-citrulline.

The protein belongs to the argininosuccinate synthase family. Type 1 subfamily. In terms of assembly, homotetramer.

The protein resides in the cytoplasm. The catalysed reaction is L-citrulline + L-aspartate + ATP = 2-(N(omega)-L-arginino)succinate + AMP + diphosphate + H(+). Its pathway is amino-acid biosynthesis; L-arginine biosynthesis; L-arginine from L-ornithine and carbamoyl phosphate: step 2/3. The sequence is that of Argininosuccinate synthase from Deinococcus radiodurans (strain ATCC 13939 / DSM 20539 / JCM 16871 / CCUG 27074 / LMG 4051 / NBRC 15346 / NCIMB 9279 / VKM B-1422 / R1).